Here is a 439-residue protein sequence, read N- to C-terminus: Probable guanine deaminase (439 aa).

Zn(2+) contacts are provided by His76 and His78. Substrate is bound by residues His78–Gln81, Arg203–Phe204, His231–Glu234, and Asp321. Zn(2+)-binding residues include His231 and Asp321.

It belongs to the metallo-dependent hydrolases superfamily. ATZ/TRZ family. It depends on Zn(2+) as a cofactor.

It carries out the reaction guanine + H2O + H(+) = xanthine + NH4(+). Its pathway is purine metabolism; guanine degradation; xanthine from guanine: step 1/1. Its function is as follows. Catalyzes the hydrolytic deamination of guanine, producing xanthine and ammonia. The protein is Probable guanine deaminase (guaD) of Deinococcus radiodurans (strain ATCC 13939 / DSM 20539 / JCM 16871 / CCUG 27074 / LMG 4051 / NBRC 15346 / NCIMB 9279 / VKM B-1422 / R1).